The following is a 185-amino-acid chain: Ribonuclease M5 1 (185 aa).

The region spanning 4–87 is the Toprim domain; the sequence is KEVIVVEGKD…AFLTKHDAAP (84 aa). Mg(2+)-binding residues include Glu10, Asp56, and Asp58.

It belongs to the ribonuclease M5 family. Requires Mg(2+) as cofactor.

It is found in the cytoplasm. It carries out the reaction Endonucleolytic cleavage of RNA, removing 21 and 42 nucleotides, respectively, from the 5'- and 3'-termini of a 5S-rRNA precursor.. Its function is as follows. Required for correct processing of both the 5' and 3' ends of 5S rRNA precursor. Cleaves both sides of a double-stranded region yielding mature 5S rRNA in one step. In Ligilactobacillus salivarius (strain UCC118) (Lactobacillus salivarius), this protein is Ribonuclease M5 1.